We begin with the raw amino-acid sequence, 548 residues long: MDKFLTYFQVRGERANAVRLFGEISEQIDCSHLKRDCFVNGICARQHFKECCNIATDNGSRTNADKLVALALRALLDRQTIWTCVIKNADYVSQYADEQMEEEVNKLYDVYLQSGTREEFEGFRQRNRPSRVVMDDSCSMLSYFYIPMNQGNPAPVAKLSRWGQFGICYYDRTNVDGLIPYDEIGLAQAIDGLKDLIEGRLPVCPYTGANGRINAVLHLPLEMEVIMAVQENATQLMRRAAQDFKFITHAGWKLYPRLLRQRFAIEDATEGVIHHVMLGHLRYYDEDTSIVKYRFLNDGSLDWRTWTIPLHLMRTARLGHLQPESILVFMHKKLTCQVCFMVDLAMLDTIPVVDSKVAELTGGTDVFYTRAYVHADNHKVPNVRDLMMNEVFRKIDDHWVIQKCHTTKEAITVTAIQIQRSIRGDGQWDTPMFHQSMALLTRLIVYWLTDVTERSAIFRLTCFAIFGCKPTARGRYIDWDDLGTFLKNVLDGRDLTVLEDETCFISMMRMAMLHVQRSKAVCATVLEAPLEIQQVGQIVEVPFDFMHN.

Belongs to the orbivirus non-structural protein NS1 family.

In Camelus dromedarius (Dromedary), this protein is Non-structural protein NS1 (Segment-5).